Consider the following 530-residue polypeptide: UDP-glucuronosyltransferase 1A9 (530 aa).

Residues 1–25 form the signal peptide; that stretch reads MACTGWTSPLPLCVCLLLTCGFAEA. Residue asparagine 71 is glycosylated (N-linked (GlcNAc...) asparagine). An N6-succinyllysine modification is found at lysine 99. 2 N-linked (GlcNAc...) asparagine glycosylation sites follow: asparagine 292 and asparagine 344. The helical transmembrane segment at 488–504 threads the bilayer; it reads VIGFLLAVVLTVAFITF.

The protein belongs to the UDP-glycosyltransferase family. As to quaternary structure, homodimer. Homooligomer. Interacts with UGT1A1, UGT1A3, UGT1A4, UGT1A6, UGT1A7, UGT1A8 and UGT1A10 to form heterodimers. Isoform 1 interacts with isoform 2/i2 suggesting that oligomerization is involved in negative regulation of transferase activity by isoform 2. Isoform 1 also interacts with respective i2 isoforms of UGT1A1, UGT1A3, UGT1A4, UGT1A6, UGT1A7, UGT1A8 and UGT1A10. In terms of tissue distribution, expressed in liver, kidney, colon, esophagus and small intestine.

It is found in the endoplasmic reticulum membrane. The catalysed reaction is glucuronate acceptor + UDP-alpha-D-glucuronate = acceptor beta-D-glucuronoside + UDP + H(+). The enzyme catalyses 2-hydroxy-17beta-estradiol + UDP-alpha-D-glucuronate = 2-hydroxy-17beta-estradiol 3-O-(beta-D-glucuronate) + UDP + H(+). It carries out the reaction 4-hydroxy-17beta-estradiol + UDP-alpha-D-glucuronate = 17beta-estradiol 4-O-(beta-D-glucuronate) + UDP + H(+). It catalyses the reaction 2-hydroxyestrone + UDP-alpha-D-glucuronate = 2-hydroxyestrone 3-O-(beta-D-glucuronate) + UDP + H(+). The catalysed reaction is 4-hydroxyestrone + UDP-alpha-D-glucuronate = estrone 4-O-(beta-D-glucuronate) + UDP + H(+). The enzyme catalyses prunetin + UDP-alpha-D-glucuronate = prunetin-5-O-beta-D-glucuronide + UDP. It carries out the reaction 8-iso-prostaglandin F2alpha + UDP-alpha-D-glucuronate = 8-iso-prostaglandin F2alpha-glucuronide + UDP + H(+). It catalyses the reaction 5-epi-5-F2t-IsoP + UDP-alpha-D-glucuronate = 5-epi-5-F2t-IsoP-glucuronide + UDP + H(+). The catalysed reaction is (5Z,8Z,11Z,14Z)-eicosatetraenoate + UDP-alpha-D-glucuronate = O-[(5Z),(8Z),(11Z),(14Z)-eicosatetraenoyl]-beta-D-glucuronate + UDP. The enzyme catalyses 15-hydroxy-(5Z,8Z,11Z,13E)-eicosatetraenoate + UDP-alpha-D-glucuronate = 15-O-(beta-D-glucuronosyl)-(5Z,8Z,11Z,14Z)-eicosatetraenoate + UDP + H(+). It carries out the reaction prostaglandin B1 + UDP-alpha-D-glucuronate = 15-O-(beta-D-glucuronosyl)-prostaglandin B1 + UDP + H(+). It catalyses the reaction (E)-ferulate + UDP-alpha-D-glucuronate = (E)-4-O-(beta-D-glucuronosyl)-ferulate + UDP + H(+). The catalysed reaction is (E)-ferulate + UDP-alpha-D-glucuronate = (E)-ferulic acid beta-D-glucuronate ester + UDP. The enzyme catalyses candesartan + UDP-alpha-D-glucuronate = candesartan O-beta-D-glucuronoside + UDP. It carries out the reaction SN-38 + UDP-alpha-D-glucuronate = SN-38 O-beta-D-glucuronide + UDP + H(+). It catalyses the reaction mycophenolate + UDP-alpha-D-glucuronate = mycophenolate 7-O-beta-D-glucuronide + UDP + H(+). Functionally, UDP-glucuronosyltransferase (UGT) that catalyzes phase II biotransformation reactions in which lipophilic substrates are conjugated with glucuronic acid to increase the metabolite's water solubility, thereby facilitating excretion into either the urine or bile. Essential for the elimination and detoxification of drugs, xenobiotics and endogenous compounds. Catalyzes the glucuronidation of endogenous estrogen hormones such as estradiol and estrone. Involved in the glucuronidation of arachidonic acid (AA) and AA-derived eicosanoids including 15-HETE, PGB1 and F2-isoprostanes (8-iso-PGF2alpha and 5-epi-5-F2t-IsoP). Glucuronates the phytochemical ferulic acid efficently at both the phenolic or the carboxylic acid group. Also catalyzes the glucuronidation of the isoflavones genistein, daidzein, glycitein, formononetin, biochanin A and prunetin, which are phytoestrogens with anticancer and cardiovascular properties. Involved in the glucuronidation of the AGTR1 angiotensin receptor antagonist caderastan, a drug which can inhibit the effect of angiotensin II. Involved in the biotransformation of 7-ethyl-10-hydroxycamptothecin (SN-38), the pharmacologically active metabolite of the anticancer drug irinotecan. Also metabolizes mycophenolate, an immunosuppressive agent. Lacks UGT glucuronidation activity but acts as a negative regulator of isoform 1. This Homo sapiens (Human) protein is UDP-glucuronosyltransferase 1A9.